The chain runs to 701 residues: Elongation factor G (701 aa).

The region spanning 11–287 (TKVRNIGIMA…AVIDYLPSPL (277 aa)) is the tr-type G domain. Residues 20 to 27 (AHIDAGKT), 84 to 88 (DTPGH), and 138 to 141 (NKMD) each bind GTP.

It belongs to the TRAFAC class translation factor GTPase superfamily. Classic translation factor GTPase family. EF-G/EF-2 subfamily.

It localises to the cytoplasm. Catalyzes the GTP-dependent ribosomal translocation step during translation elongation. During this step, the ribosome changes from the pre-translocational (PRE) to the post-translocational (POST) state as the newly formed A-site-bound peptidyl-tRNA and P-site-bound deacylated tRNA move to the P and E sites, respectively. Catalyzes the coordinated movement of the two tRNA molecules, the mRNA and conformational changes in the ribosome. This chain is Elongation factor G, found in Mycobacterium ulcerans (strain Agy99).